The sequence spans 398 residues: 1-deoxy-D-xylulose 5-phosphate reductoisomerase (398 aa).

NADPH contacts are provided by Thr11, Gly12, Ser13, Ile14, Arg38, Asn39, and Asn125. Lys126 lines the 1-deoxy-D-xylulose 5-phosphate pocket. Glu127 serves as a coordination point for NADPH. Asp151 contacts Mn(2+). Ser152, Glu153, Ser179, and His202 together coordinate 1-deoxy-D-xylulose 5-phosphate. A Mn(2+)-binding site is contributed by Glu153. Residue Gly208 coordinates NADPH. 1-deoxy-D-xylulose 5-phosphate contacts are provided by Ser215, Asn220, Lys221, and Glu224. Residue Glu224 coordinates Mn(2+).

Belongs to the DXR family. Mg(2+) serves as cofactor. The cofactor is Mn(2+).

The catalysed reaction is 2-C-methyl-D-erythritol 4-phosphate + NADP(+) = 1-deoxy-D-xylulose 5-phosphate + NADPH + H(+). It functions in the pathway isoprenoid biosynthesis; isopentenyl diphosphate biosynthesis via DXP pathway; isopentenyl diphosphate from 1-deoxy-D-xylulose 5-phosphate: step 1/6. In terms of biological role, catalyzes the NADPH-dependent rearrangement and reduction of 1-deoxy-D-xylulose-5-phosphate (DXP) to 2-C-methyl-D-erythritol 4-phosphate (MEP). The sequence is that of 1-deoxy-D-xylulose 5-phosphate reductoisomerase from Burkholderia mallei (strain NCTC 10247).